The following is a 539-amino-acid chain: Hydroxylamine reductase (539 aa).

Residues cysteine 3, cysteine 6, cysteine 13, and cysteine 19 each contribute to the [4Fe-4S] cluster site. 8 residues coordinate hybrid [4Fe-2O-2S] cluster: histidine 240, glutamate 264, cysteine 308, cysteine 395, cysteine 423, cysteine 448, glutamate 482, and lysine 484. Cysteine 395 is modified (cysteine persulfide).

It belongs to the HCP family. It depends on [4Fe-4S] cluster as a cofactor. Hybrid [4Fe-2O-2S] cluster serves as cofactor.

It localises to the cytoplasm. The catalysed reaction is A + NH4(+) + H2O = hydroxylamine + AH2 + H(+). Catalyzes the reduction of hydroxylamine to form NH(3) and H(2)O. This Thermodesulfovibrio yellowstonii (strain ATCC 51303 / DSM 11347 / YP87) protein is Hydroxylamine reductase.